Consider the following 892-residue polypeptide: E3 ubiquitin ligase PQT3-like (892 aa).

A DWNN domain is found at 3-76 (IYYKFKSARD…NTSVLIRRVP (74 aa)). The CCHC-type zinc-finger motif lies at 210 to 224 (CHRCNIPGHFIQHCP). Phosphoserine is present on serine 285. The RING-type; degenerate zinc-finger motif lies at 295–333 (CPLCKEVMKDAALTSKCCYKSFCDKCIRDHIISKSMCVC). 3 disordered regions span residues 375–408 (DLES…NNND), 459–493 (TQAP…MQWN), and 623–892 (MLRK…RSRA). Serine 404 carries the phosphoserine modification. Positions 623-644 (MLRKRENERRPEGGKMFRDGEN) are enriched in basic and acidic residues. Residues 647–666 (MMMNNGTSASASSINPNKSR) show a composition bias toward polar residues. Over residues 674–692 (HDYDRRRRPEKRLSPEHPP) the composition is skewed to basic and acidic residues. A Nuclear localization signal motif is present at residues 693-700 (TRKNISPS). Residues 708-745 (ERYPDERDRQRDRERSRHQDVDREHDRTRDRRDEDRSR) show a composition bias toward basic and acidic residues. The span at 810 to 832 (SSSSTSVTDPSASASAAAAVGTS) shows a compositional bias: low complexity. Serine 866 is modified (phosphoserine). Positions 875–892 (SEDKLRYSKRGKGERSRA) are enriched in basic and acidic residues.

It localises to the nucleus. It catalyses the reaction S-ubiquitinyl-[E2 ubiquitin-conjugating enzyme]-L-cysteine + [acceptor protein]-L-lysine = [E2 ubiquitin-conjugating enzyme]-L-cysteine + N(6)-ubiquitinyl-[acceptor protein]-L-lysine.. In Arabidopsis thaliana (Mouse-ear cress), this protein is E3 ubiquitin ligase PQT3-like.